The sequence spans 538 residues: Spindle pole body protein CSA6 (538 aa).

2 disordered regions span residues 1–31 and 57–129; these read MEDSTEDIIKSFTLEQSPEIKPKPKSKTSDL and QNIS…KYQD. Composition is skewed to basic and acidic residues over residues 18–30 and 57–68; these read PEIKPKPKSKTSD and QNISDSEHDLTP. Polar residues-rich tracts occupy residues 86-96 and 104-122; these read KFSSSIPQKPT and TSPTKNYTDHINQLRSGPN. The stretch at 144 to 237 forms a coiled coil; that stretch reads KQEQNLKLEN…RNERDELVKD (94 aa). Residues 304–323 are compositionally biased toward basic and acidic residues; the sequence is KKISEPSAAVEKDTTSEDKT. Disordered stretches follow at residues 304 to 338 and 355 to 458; these read KKISEPSAAVEKDTTSEDKTPPIPNTANSSDTPRM and SSNN…STKY. Polar residues-rich tracts occupy residues 355-392 and 407-425; these read SSNNKNTLSPKQAINSQTYSQPNNFSNNTVPPSQSAAY and TNFYSSSTPNTNGYNQSSQ. The segment covering 426-444 has biased composition (basic and acidic residues); sequence SDERPETFELPHVAKDHWL. Positions 446–457 are enriched in polar residues; it reads RPTSERSTQSTK.

It localises to the cytoplasm. The protein localises to the cytoskeleton. Its subcellular location is the microtubule organizing center. The protein resides in the spindle pole body. In terms of biological role, plays a role in mitotic spindle pole body organization, possibly at the point of spindle pole body separation. Required for mitotic exit. The protein is Spindle pole body protein CSA6 of Candida albicans (strain SC5314 / ATCC MYA-2876) (Yeast).